The primary structure comprises 1201 residues: Vitamin B12-dependent ribonucleotide reductase (1201 aa).

Residues serine 153, 198 to 199, glycine 230, 482 to 486, and 683 to 687 each bind substrate; these read AC, NPCSE, and PTGTI. The cysteines at positions 199 and 495 are disulfide-linked. Asparagine 482 acts as the Proton acceptor in catalysis. The Cysteine radical intermediate role is filled by cysteine 484. The Proton acceptor role is filled by glutamate 486. Over residues 1100–1118 the composition is skewed to basic and acidic residues; sequence DEIGSKRATAESNGQEKET. Positions 1100 to 1120 are disordered; sequence DEIGSKRATAESNGQEKETLS.

It belongs to the ribonucleoside diphosphate reductase class-2 family. Adenosylcob(III)alamin is required as a cofactor.

The enzyme catalyses a 2'-deoxyribonucleoside 5'-diphosphate + [thioredoxin]-disulfide + H2O = a ribonucleoside 5'-diphosphate + [thioredoxin]-dithiol. Functionally, catalyzes the reduction of ribonucleotides to deoxyribonucleotides. May function to provide a pool of deoxyribonucleotide precursors for DNA repair during oxygen limitation and/or for immediate growth after restoration of oxygen. The protein is Vitamin B12-dependent ribonucleotide reductase (nrdJ) of Leptospira interrogans serogroup Icterohaemorrhagiae serovar copenhageni (strain Fiocruz L1-130).